Consider the following 156-residue polypeptide: 6,7-dimethyl-8-ribityllumazine synthase (156 aa).

Residues phenylalanine 22, 57–59 (AYE), and 81–83 (TVI) each bind 5-amino-6-(D-ribitylamino)uracil. Residue 86–87 (GT) coordinates (2S)-2-hydroxy-3-oxobutyl phosphate. Histidine 89 functions as the Proton donor in the catalytic mechanism. 5-amino-6-(D-ribitylamino)uracil is bound at residue phenylalanine 114. Arginine 128 contacts (2S)-2-hydroxy-3-oxobutyl phosphate.

This sequence belongs to the DMRL synthase family. Forms an icosahedral capsid composed of 60 subunits, arranged as a dodecamer of pentamers.

The catalysed reaction is (2S)-2-hydroxy-3-oxobutyl phosphate + 5-amino-6-(D-ribitylamino)uracil = 6,7-dimethyl-8-(1-D-ribityl)lumazine + phosphate + 2 H2O + H(+). Its pathway is cofactor biosynthesis; riboflavin biosynthesis; riboflavin from 2-hydroxy-3-oxobutyl phosphate and 5-amino-6-(D-ribitylamino)uracil: step 1/2. Catalyzes the formation of 6,7-dimethyl-8-ribityllumazine by condensation of 5-amino-6-(D-ribitylamino)uracil with 3,4-dihydroxy-2-butanone 4-phosphate. This is the penultimate step in the biosynthesis of riboflavin. The sequence is that of 6,7-dimethyl-8-ribityllumazine synthase from Cronobacter sakazakii (strain ATCC BAA-894) (Enterobacter sakazakii).